The sequence spans 85 residues: Large ribosomal subunit protein bL27 (85 aa).

This sequence belongs to the bacterial ribosomal protein bL27 family.

The sequence is that of Large ribosomal subunit protein bL27 from Xylella fastidiosa (strain 9a5c).